The chain runs to 418 residues: Tektin-1 (418 aa).

Coiled coils occupy residues lysine 21–leucine 84, leucine 268–glycine 308, and arginine 336–isoleucine 383. The tract at residues proline 399–cysteine 418 is disordered.

Belongs to the tektin family. As to quaternary structure, microtubule inner protein component of sperm flagellar doublet microtubules. In terms of processing, ubiquitinated, leading to its degradation. Deubiquitinated by USP16, promoting its stability. In terms of tissue distribution, expressed in trachea multiciliated cells.

The protein resides in the cytoplasm. The protein localises to the cytoskeleton. Its subcellular location is the cilium axoneme. It is found in the flagellum axoneme. Its function is as follows. Microtubule inner protein (MIP) part of the dynein-decorated doublet microtubules (DMTs) in cilia and flagellar axoneme. Forms filamentous polymers in the walls of ciliary and flagellar microtubules. This chain is Tektin-1 (TEKT1), found in Bos taurus (Bovine).